The following is a 581-amino-acid chain: MKSHIESLLEQTIESFKNQGIVPADFQARIQVDRTKDKTHGDLATNLAMMLTKVAGKNPRELAQLIIDNLPPSSHVAKVEIAGPGFINFFIDDNALATQLEQALNDEHFGITLPEPQTIVVDYSSPNLAKEMHVGHLRSTIIGDSVVRALEFLGHKVIRQNHVGDWGTQFGMLLAYMEELRAANGEQAQLELSDLETFYRAAKLRFDESTDFATRARQLVVALQSGDEYCNKLWQEFNDISLSHCHDVYERLGVSLTRADVHGESAYNADLEQVVKDLDAKGLLSESNGAKVVFQEAFRTKEGEPLPVIIQKADGGYLYATSDLAAMRYRSKVLKADRALYFVDLRQALHFQQVFSLAKLAKFVRKDMQLEHNGFGTMNGEDGRPFKTRSGGVVKLVDLLDEANNRALELVRSKNPDMDEATLTEIARVVGISSVKYADLSKNRTSDYIFSFEQMLSFEGNTAPYLLYAYTRVAGIFKRAEDIDLTDAKIVLEHDKEKELATKLAQFGETLYKMTDKAQPNMLCNYLYELAGAFSSFYEACPVLAADTPAQQGSRLLLAKLTANTLNKGLSLLGIETLERM.

Positions P126–H136 match the 'HIGH' region motif.

The protein belongs to the class-I aminoacyl-tRNA synthetase family. As to quaternary structure, monomer.

Its subcellular location is the cytoplasm. It catalyses the reaction tRNA(Arg) + L-arginine + ATP = L-arginyl-tRNA(Arg) + AMP + diphosphate. The sequence is that of Arginine--tRNA ligase from Shewanella denitrificans (strain OS217 / ATCC BAA-1090 / DSM 15013).